Here is a 326-residue protein sequence, read N- to C-terminus: Acetyl-coenzyme A carboxylase carboxyl transferase subunit alpha (326 aa).

One can recognise a CoA carboxyltransferase C-terminal domain in the interval K44–E298.

This sequence belongs to the AccA family. Acetyl-CoA carboxylase is a heterohexamer composed of biotin carboxyl carrier protein (AccB), biotin carboxylase (AccC) and two subunits each of ACCase subunit alpha (AccA) and ACCase subunit beta (AccD).

Its subcellular location is the cytoplasm. The enzyme catalyses N(6)-carboxybiotinyl-L-lysyl-[protein] + acetyl-CoA = N(6)-biotinyl-L-lysyl-[protein] + malonyl-CoA. It functions in the pathway lipid metabolism; malonyl-CoA biosynthesis; malonyl-CoA from acetyl-CoA: step 1/1. Its function is as follows. Component of the acetyl coenzyme A carboxylase (ACC) complex. First, biotin carboxylase catalyzes the carboxylation of biotin on its carrier protein (BCCP) and then the CO(2) group is transferred by the carboxyltransferase to acetyl-CoA to form malonyl-CoA. This chain is Acetyl-coenzyme A carboxylase carboxyl transferase subunit alpha, found in Trichormus variabilis (strain ATCC 29413 / PCC 7937) (Anabaena variabilis).